Consider the following 1419-residue polypeptide: Collagen alpha-1(II) chain (1419 aa).

Positions 1-25 are cleaved as a signal peptide; the sequence is MIRLGAPQSLVLLTLLIATVLQCQG. A propeptide spans 26–113 (N-terminal propeptide); it reads QDARKLGPKG…PGLGGGNFAA (88 aa). Positions 28–1168 are disordered; the sequence is ARKLGPKGQK…GQREKGPDPL (1141 aa). Basic and acidic residues-rich tracts occupy residues 36 to 47 and 64 to 85; these read QKGEPGDIKDII and PRGDRGDKGERGAPGPRGRDGE. Residues 89–104 are compositionally biased toward pro residues; that stretch reads PGNPGPPGPPGPPGPP. Lysine 122 is subject to 5-hydroxylysine. A glycan (O-linked (Gal...) hydroxylysine) is linked at lysine 122. Residues 124–135 show a composition bias toward low complexity; it reads GGAQMGVMQGPM. A triple-helical region region spans residues 133–1146; that stretch reads GPMGPMGPRG…PGPPGPPGPP (1014 aa). Positions 140 to 149 are enriched in pro residues; the sequence is PRGPPGPAGA. The span at 150-171 shows a compositional bias: low complexity; sequence PGPQGFQGNPGEPGEPGVSGPI. Positions 183–197 are enriched in basic and acidic residues; it reads PGDDGEAGKPGKAGE. 3 positions are modified to 5-hydroxylysine: lysine 219, lysine 231, and lysine 240. O-linked (Gal...) hydroxylysine glycosylation is found at lysine 219, lysine 231, and lysine 240. Composition is skewed to low complexity over residues 242-252 and 267-282; these read ESGSPGENGSP and TGPAGAAGARGNDGQP. Gly residues predominate over residues 292 to 301; it reads GPAGGPGFLG. Residue lysine 306 is modified to 5-hydroxylysine. O-linked (Gal...) hydroxylysine glycosylation is present at lysine 306. Residues 335-363 show a composition bias toward low complexity; sequence PAGASGNPGTDGIPGAKGSAGAPGIAGAP. Over residues 365–374 the composition is skewed to pro residues; it reads FPGPRGPPGP. Residues 404 to 417 are compositionally biased toward low complexity; sequence ETGPAGPQGAPGPA. 5-hydroxylysine occurs at positions 540 and 552. O-linked (Gal...) hydroxylysine glycosylation is found at lysine 540 and lysine 552. Residues 554–563 show a composition bias toward low complexity; that stretch reads LAGAPGLRGL. 2 positions are modified to 4-hydroxyproline: proline 591 and proline 600. Position 602 is a 3-hydroxyproline; partial (proline 602). Proline 603 and proline 606 each carry 4-hydroxyproline. The segment covering 638 to 668 has biased composition (low complexity); it reads ERGSPGAQGLQGPRGLPGTPGTDGPKGAAGP. Residues 696 to 707 show a composition bias toward basic and acidic residues; the sequence is KGDRGDVGEKGP. Low complexity-rich tracts occupy residues 765–780 and 809–846; these read AGFAGPPGADGQPGAK and PTGVTGPKGARGAQGPPGATGFPGAAGRVGPPGSNGNP. Proline 839 is modified (3-hydroxyproline; partial). 4-hydroxyproline is present on residues proline 840, proline 846, and proline 852. Over residues 1001–1011 the composition is skewed to pro residues; it reads APGPPGSPGPA. The segment covering 1047 to 1061 has biased composition (basic and acidic residues); sequence RGDKGEAGEPGERGL. 3-hydroxyproline; partial is present on proline 1076. Composition is skewed to low complexity over residues 1080-1089 and 1103-1113; these read SGDQGTSGPA and PSGKDGSNGIP. Proline 1113 carries the 4-hydroxyproline modification. Proline 1118 carries the post-translational modification 3-hydroxyproline. Proline 1119 carries the 4-hydroxyproline modification. Pro residues predominate over residues 1131–1148; the sequence is AGPPGNPGPPGPPGPPGP. 3-hydroxyproline; partial is present on proline 1133. 4-hydroxyproline occurs at positions 1134 and 1137. Residue proline 1139 is modified to 3-hydroxyproline; partial. Proline 1140 and proline 1143 each carry 4-hydroxyproline. Residue proline 1145 is modified to 3-hydroxyproline; partial. The residue at position 1146 (proline 1146) is a 4-hydroxyproline. Residues 1147–1173 form a nonhelical region (C-terminal) region; sequence GPGIDMSAFAGLGQREKGPDPLQYMRA. Residues 1185–1419 form the Fibrillar collagen NC1 domain; that stretch reads VEVDATLKSL…GVDIGPVCFL (235 aa). Intrachain disulfides connect cysteine 1215-cysteine 1247, cysteine 1255-cysteine 1417, and cysteine 1325-cysteine 1370. Ca(2+) contacts are provided by aspartate 1233, asparagine 1235, glutamine 1236, cysteine 1238, and aspartate 1241. Asparagine 1320 is a glycosylation site (N-linked (GlcNAc...) asparagine).

The protein belongs to the fibrillar collagen family. In terms of assembly, homotrimers of alpha 1(II) chains. Post-translationally, contains mostly 4-hydroxyproline. Prolines at the third position of the tripeptide repeating unit (G-X-P) are 4-hydroxylated in some or all of the chains. Contains 3-hydroxyproline at a few sites. This modification occurs on the first proline residue in the sequence motif Gly-Pro-Hyp, where Hyp is 4-hydroxyproline. In terms of processing, lysine residues at the third position of the tripeptide repeating unit (G-X-Y) are 5-hydroxylated in some or all of the chains. Post-translationally, O-glycosylated on hydroxylated lysine residues. The O-linked glycan consists of a Glc-Gal disaccharide. In terms of tissue distribution, expressed in chondrocytes.

The protein resides in the secreted. Its subcellular location is the extracellular space. The protein localises to the extracellular matrix. Functionally, type II collagen is specific for cartilaginous tissues. It is essential for the normal embryonic development of the skeleton, for linear growth and for the ability of cartilage to resist compressive forces. In Rattus norvegicus (Rat), this protein is Collagen alpha-1(II) chain.